The primary structure comprises 276 residues: Rhomboid protease GlpG (276 aa).

6 helical membrane-spanning segments follow: residues 94-114, 142-162, 169-189, 192-212, 229-249, and 250-270; these read GPVTWVMMIACVVVFIAMQIL, ALMHFSLMHILFNLLWWWYLG, LGSGKLIVITLISALLSGYVQ, FSGPWFGGLSGVVYALMGYVW, LIIFALIWIVAGWFDLFGMSM, and ANGAHIAGLAVGLAMAFVDSL. Catalysis depends on Ser-201, which acts as the Nucleophile. His-254 is a catalytic residue.

It belongs to the peptidase S54 family.

It is found in the cell inner membrane. The enzyme catalyses Cleaves type-1 transmembrane domains using a catalytic dyad composed of serine and histidine that are contributed by different transmembrane domains.. Functionally, rhomboid-type serine protease that catalyzes intramembrane proteolysis. The polypeptide is Rhomboid protease GlpG (Escherichia coli O81 (strain ED1a)).